A 100-amino-acid polypeptide reads, in one-letter code: Protamine-2 (100 aa).

The segment at 1-45 (MVRYHVRSPSERPHREYRQLVNGQEQGRHGQEEQGMSAEGVEGYG) is disordered. Residues S8, S10, and S37 each carry the phosphoserine modification. Residues 8 to 18 (SPSERPHREYR) show a composition bias toward basic and acidic residues.

The protein belongs to the protamine P2 family. In terms of assembly, interacts with TDRP. Proteolytic processing into mature chains is required for histone eviction during spermatogenesis. Transition proteins (TNP1 and TNP2) are required for processing. In terms of tissue distribution, testis.

It is found in the nucleus. The protein resides in the chromosome. Its function is as follows. Protamines substitute for histones in the chromatin of sperm during the haploid phase of spermatogenesis. They compact sperm DNA into a highly condensed, stable and inactive complex. This chain is Protamine-2 (PRM2), found in Alouatta seniculus (Red howler monkey).